Reading from the N-terminus, the 376-residue chain is Thymidine kinase (376 aa).

Positions 1 to 47 (MASHAGQQHAPAFGQAARASGPTDGRAASRPSHRQGASEARGDPELP) are disordered. 56-63 (GPHGVGKT) serves as a coordination point for ATP. Residue Glu84 is the Proton acceptor of the active site. Substrate contacts are provided by Tyr102 and Gln126. Arg217 contacts ATP. Arg223 lines the substrate pocket.

It belongs to the herpesviridae thymidine kinase family. In terms of assembly, homodimer.

The enzyme catalyses thymidine + ATP = dTMP + ADP + H(+). Functionally, catalyzes the transfer of the gamma-phospho group of ATP to thymidine to generate dTMP in the salvage pathway of pyrimidine synthesis. The dTMP serves as a substrate for DNA polymerase during viral DNA replication. Allows the virus to be reactivated and to grow in non-proliferative cells lacking a high concentration of phosphorylated nucleic acid precursors. This chain is Thymidine kinase, found in Human herpesvirus 2 (strain 333) (HHV-2).